The primary structure comprises 545 residues: Putative serine/threonine-protein kinase L673 (545 aa).

In terms of domain architecture, Cyclin N-terminal spans 13–125; sequence RLGLVNWMLN…YKVYYLTIWK (113 aa). In terms of domain architecture, Protein kinase spans 264 to 543; sequence IDFQNKLGSG…NCLKKIKESF (280 aa). ATP contacts are provided by residues 270–278 and Lys291; that span reads LGSGTYGSV. Asp384 (proton acceptor) is an active-site residue.

It belongs to the protein kinase superfamily. Ser/Thr protein kinase family.

It carries out the reaction L-seryl-[protein] + ATP = O-phospho-L-seryl-[protein] + ADP + H(+). It catalyses the reaction L-threonyl-[protein] + ATP = O-phospho-L-threonyl-[protein] + ADP + H(+). This Acanthamoeba polyphaga (Amoeba) protein is Putative serine/threonine-protein kinase L673.